Consider the following 294-residue polypeptide: 1D-myo-inositol 2-acetamido-2-deoxy-alpha-D-glucopyranoside deacetylase (294 aa).

Residues H14, D17, and H149 each contribute to the Zn(2+) site.

Belongs to the MshB deacetylase family. Requires Zn(2+) as cofactor.

The catalysed reaction is 1D-myo-inositol 2-acetamido-2-deoxy-alpha-D-glucopyranoside + H2O = 1D-myo-inositol 2-amino-2-deoxy-alpha-D-glucopyranoside + acetate. Functionally, catalyzes the deacetylation of 1D-myo-inositol 2-acetamido-2-deoxy-alpha-D-glucopyranoside (GlcNAc-Ins) in the mycothiol biosynthesis pathway. The polypeptide is 1D-myo-inositol 2-acetamido-2-deoxy-alpha-D-glucopyranoside deacetylase (Rhodococcus erythropolis (strain PR4 / NBRC 100887)).